The primary structure comprises 190 residues: GTP cyclohydrolase 1 (190 aa).

Zn(2+)-binding residues include Cys-80, His-83, and Cys-151.

It belongs to the GTP cyclohydrolase I family. Toroid-shaped homodecamer, composed of two pentamers of five dimers.

The catalysed reaction is GTP + H2O = 7,8-dihydroneopterin 3'-triphosphate + formate + H(+). Its pathway is cofactor biosynthesis; 7,8-dihydroneopterin triphosphate biosynthesis; 7,8-dihydroneopterin triphosphate from GTP: step 1/1. This chain is GTP cyclohydrolase 1, found in Rickettsia typhi (strain ATCC VR-144 / Wilmington).